Consider the following 1521-residue polypeptide: Lysophospholipase NTE1 (1521 aa).

The Cytoplasmic segment spans residues 1 to 50 (MDVVNSTARAAVTSATAVTAVTGTGDRHPNPLSSAVAAASDVANAHGSSS). Residues 51 to 71 (WLGLFARVVLWLLQFVSMVLY) traverse the membrane as a helical segment. Residues 72–96 (YAIKLATISVPTLLYTLFSTSLTVT) are Lumenal-facing. Residues 97-117 (MNATTLMLIVAAMIGAISWVV) form a helical membrane-spanning segment. Residues 118–1521 (RYRYLNMYSR…RTMAPRRASI (1404 aa)) are Cytoplasmic-facing. 3 disordered regions span residues 280-301 (HADE…PNYP), 315-372 (SVPN…SAHP), and 738-768 (HAMD…KVDD). Polar residues-rich tracts occupy residues 316 to 334 (VPNT…NNLP) and 738 to 753 (HAMD…QRSP). A nucleoside 3',5'-cyclic phosphate-binding positions include 670 to 789 (PASP…GGLA) and 837 to 957 (RLTN…IASR). The PNPLA domain occupies 1217–1381 (LVLGGGGARG…VDNLTVSHMK (165 aa)). The GXGXXG signature appears at 1221–1226 (GGGARG). Residues 1248-1252 (GTSIG) carry the GXSXG motif. Catalysis depends on S1250, which acts as the Nucleophile. The Proton acceptor role is filled by D1368. A DGA/G motif is present at residues 1368–1370 (DGG).

It belongs to the NTE family.

The protein resides in the endoplasmic reticulum membrane. It carries out the reaction a 1-acyl-sn-glycero-3-phosphocholine + H2O = sn-glycerol 3-phosphocholine + a fatty acid + H(+). With respect to regulation, inhibited by organophosphorus esters. Intracellular phospholipase B that catalyzes the double deacylation of phosphatidylcholine (PC) to glycerophosphocholine (GroPCho). Plays an important role in membrane lipid homeostasis. Responsible for the rapid PC turnover in response to inositol, elevated temperatures, or when choline is present in the growth medium. The sequence is that of Lysophospholipase NTE1 (NTE1) from Chaetomium globosum (strain ATCC 6205 / CBS 148.51 / DSM 1962 / NBRC 6347 / NRRL 1970) (Soil fungus).